A 440-amino-acid polypeptide reads, in one-letter code: Transposon Ty1-BL Gag polyprotein (440 aa).

3 stretches are compositionally biased toward polar residues: residues 20-31 (SVTSKEVQTTQD), 46-55 (VSTQANSQQP), and 137-168 (VGTH…TNQH). 3 disordered regions span residues 20–84 (SVTS…QNGP), 137–173 (VGTH…RPPP), and 350–424 (QQES…TTEP). An RNA-binding region spans residues 299–401 (NNGIPINNKV…NSQSRTARAH (103 aa)). A compositionally biased stretch (basic and acidic residues) spans 363-372 (SPSDEKKDSR). Over residues 373 to 411 (TYTNTTKPKSITRNSQKPNNSQSRTARAHNVSTFNNSPG) the composition is skewed to polar residues.

In terms of assembly, homotrimer.

Its subcellular location is the cytoplasm. In terms of biological role, capsid protein (CA) is the structural component of the virus-like particle (VLP), forming the shell that encapsulates the retrotransposons dimeric RNA genome. The particles are assembled from trimer-clustered units and there are holes in the capsid shells that allow for the diffusion of macromolecules. CA also has nucleocapsid-like chaperone activity, promoting primer tRNA(i)-Met annealing to the multipartite primer-binding site (PBS), dimerization of Ty1 RNA and initiation of reverse transcription. In Saccharomyces cerevisiae (strain ATCC 204508 / S288c) (Baker's yeast), this protein is Transposon Ty1-BL Gag polyprotein (TY1A-BL).